Consider the following 153-residue polypeptide: Transcription antitermination protein NusB (153 aa).

Belongs to the NusB family.

Functionally, involved in transcription antitermination. Required for transcription of ribosomal RNA (rRNA) genes. Binds specifically to the boxA antiterminator sequence of the ribosomal RNA (rrn) operons. The sequence is that of Transcription antitermination protein NusB from Symbiobacterium thermophilum (strain DSM 24528 / JCM 14929 / IAM 14863 / T).